Reading from the N-terminus, the 447-residue chain is Argininosuccinate lyase (447 aa).

The protein belongs to the lyase 1 family. Argininosuccinate lyase subfamily.

It is found in the cytoplasm. The catalysed reaction is 2-(N(omega)-L-arginino)succinate = fumarate + L-arginine. The protein operates within amino-acid biosynthesis; L-arginine biosynthesis; L-arginine from L-ornithine and carbamoyl phosphate: step 3/3. This is Argininosuccinate lyase from Bacteroides fragilis (strain ATCC 25285 / DSM 2151 / CCUG 4856 / JCM 11019 / LMG 10263 / NCTC 9343 / Onslow / VPI 2553 / EN-2).